We begin with the raw amino-acid sequence, 597 residues long: Sialic acid-binding Ig-like lectin 12 (597 aa).

Residues 1–20 (MLLLLLLLLLPPLLCGRVGA) form the signal peptide. 2 Ig-like V-type domains span residues 21 to 144 (KEQK…VNVT) and 145 to 271 (ASQD…VHVT). Topologically, residues 21–483 (KEQKDYLLTM…RPISGVTLGA (463 aa)) are extracellular. Cysteine 46 and cysteine 106 are joined by a disulfide. N-linked (GlcNAc...) asparagine glycans are attached at residues asparagine 142, asparagine 181, asparagine 232, and asparagine 292. Intrachain disulfides connect cysteine 168–cysteine 301, cysteine 173–cysteine 233, and cysteine 295–cysteine 344. Residues 277–360 (PTFSIPGTLE…AGVTTTRAVR (84 aa)) form the Ig-like C2-type 1 domain. Residues asparagine 362, asparagine 369, and asparagine 387 are each glycosylated (N-linked (GlcNAc...) asparagine). An Ig-like C2-type 2 domain is found at 367–464 (PQNLTMTVFQ…GSQHISLSLS (98 aa)). Residues cysteine 403 and cysteine 448 are joined by a disulfide bond. A helical transmembrane segment spans residues 484-504 (VGGAGATALVFLSFCIIFVVV). At 505-597 (RSCRKKSARP…YEYSEINILK (93 aa)) the chain is on the cytoplasmic side. Residues 514 to 558 (PAVGVGDTGMEDTNAVRGSASQGPLIESPADDSPPHHAPPALATP) form a disordered region. Residues 565–570 (IQYASL) carry the ITIM motif motif. A phosphotyrosine mark is found at tyrosine 567 and tyrosine 590. The SLAM-like motif motif lies at 588 to 593 (YEYSEI).

The protein belongs to the immunoglobulin superfamily. SIGLEC (sialic acid binding Ig-like lectin) family.

It is found in the membrane. Functionally, putative adhesion molecule that mediates sialic-acid dependent binding to cells. The sialic acid recognition site may be masked by cis interactions with sialic acids on the same cell surface. This is Sialic acid-binding Ig-like lectin 12 (SIGLEC12) from Pan troglodytes (Chimpanzee).